We begin with the raw amino-acid sequence, 644 residues long: Exoribonuclease 2 (644 aa).

One can recognise an RNB domain in the interval 189 to 516; sequence REDLTALDFV…NHRLLKAVIK (328 aa). The S1 motif domain maps to 561–643; it reads DTRFAAEIVD…ETRSIIARPV (83 aa).

It belongs to the RNR ribonuclease family. RNase II subfamily.

It is found in the cytoplasm. The catalysed reaction is Exonucleolytic cleavage in the 3'- to 5'-direction to yield nucleoside 5'-phosphates.. Functionally, involved in mRNA degradation. Hydrolyzes single-stranded polyribonucleotides processively in the 3' to 5' direction. The sequence is that of Exoribonuclease 2 from Shigella boydii serotype 18 (strain CDC 3083-94 / BS512).